The following is a 1876-amino-acid chain: Phenolphthiocerol/phthiocerol polyketide synthase subunit A (1876 aa).

Residues 9–83 (ADLRHWLIDY…ALAAYLAAPE (75 aa)) form the Carrier 1 domain. Residue Ser43 is modified to O-(pantetheine 4'-phosphoryl)serine. The 426-residue stretch at 101 to 526 (DEPIAVVGMG…GTNAHVVIEQ (426 aa)) folds into the Ketosynthase family 3 (KS3) domain. Active-site for beta-ketoacyl synthase activity residues include Cys273, His408, and His448. An acyltransferase region spans residues 624–950 (EGSPGPGTVF…NLNKAHTIHP (327 aa)). Ser720 acts as the For malonyltransferase activity in catalysis. The segment at 997–1112 (HTTVATVSAS…AQLSSSPSDS (116 aa)) is N-terminal hotdog fold. Positions 997 to 1267 (HTTVATVSAS…YRALDFGLDV (271 aa)) constitute a PKS/mFAS DH domain. Residue His1027 is the Proton acceptor; for dehydratase activity of the active site. The tract at residues 1104 to 1130 (QLSSSPSDSASSLNEHHRANGQPPERA) is disordered. Over residues 1106 to 1115 (SSSPSDSASS) the composition is skewed to low complexity. The segment at 1130-1267 (AHRDLIPDLA…YRALDFGLDV (138 aa)) is C-terminal hotdog fold. Asp1186 (proton donor; for dehydratase activity) is an active-site residue. The interval 1491–1728 (AAYLITGGLG…DGYDVAQAVV (238 aa)) is beta-ketoacyl reductase. NADP(+) is bound at residue 1492 to 1551 (AYLITGGLGALGLLMADWLADRGAHRLVLTGRTPLPPRRDWQLDTLDTELRRRIDAIRAL). In terms of domain architecture, Carrier 2 spans 1759–1836 (EVRSELEQGL…SLASYLAKRV (78 aa)). At Ser1796 the chain carries O-(pantetheine 4'-phosphoryl)serine.

It depends on NADP(+) as a cofactor. The cofactor is pantetheine 4'-phosphate.

The enzyme catalyses icosanoyl-[(phenol)carboxyphthiodiolenone synthase] + 2 (S)-methylmalonyl-CoA + 3 malonyl-CoA + 5 NADPH + 10 H(+) = C32-carboxyphthiodiolenone-[(phenol)carboxyphthiodiolenone synthase] + 5 CO2 + 5 NADP(+) + 5 CoA + 2 H2O. It carries out the reaction docosanoyl-[(phenol)carboxyphthiodiolenone synthase] + 2 (S)-methylmalonyl-CoA + 3 malonyl-CoA + 5 NADPH + 10 H(+) = C34-carboxyphthiodiolenone-[(phenol)carboxyphthiodiolenone synthase] + 5 CO2 + 5 NADP(+) + 5 CoA + 2 H2O. It catalyses the reaction 17-(4-hydroxyphenyl)heptadecanoyl-[(phenol)carboxyphthiodiolenone synthase] + 2 (S)-methylmalonyl-CoA + 3 malonyl-CoA + 5 NADPH + 10 H(+) = C35-(phenol)carboxyphthiodiolenone-[(phenol)carboxyphthiodiolenone synthase] + 5 CO2 + 5 NADP(+) + 5 CoA + 2 H2O. The catalysed reaction is 19-(4-hydroxyphenyl)nonadecanoyl-[(phenol)carboxyphthiodiolenone synthase] + 2 (S)-methylmalonyl-CoA + 3 malonyl-CoA + 5 NADPH + 10 H(+) = C37-(phenol)carboxyphthiodiolenone-[(phenol)carboxyphthiodiolenone synthase] + 5 CO2 + 5 NADP(+) + 5 CoA + 2 H2O. It functions in the pathway lipid metabolism; fatty acid biosynthesis. In terms of biological role, part of the PpsABCDE complex involved in the biosynthesis of the lipid core common to phthiocerols and phenolphthiocerols by successive additions of malonyl-CoA or methylmalonyl-CoA extender units. PpsA can accept as substrate the activated forms of either icosanoyl (C20), docosanoyl (C22) or lignoceroyl (C24) groups from FadD26, or a (4-hydroxyphenyl)-C17 or (4-hydroxyphenyl)-C19 fatty acyl from FadD29. PpsA initiates the biosynthesis and extends its substrate using a malonyl-CoA extender unit. The PpsB and PpsC proteins add the second and third malonyl-CoA extender units. PpsD adds an (R)-methylmalonyl unit and PpsE adds a second (R)-methylmalonyl unit. The incorporation of the methylmalonyl units results in formation of two branched methyl groups in the elongated product. The protein is Phenolphthiocerol/phthiocerol polyketide synthase subunit A (ppsA) of Mycobacterium bovis (strain ATCC BAA-935 / AF2122/97).